The primary structure comprises 145 residues: Putative type I specificity subunit S.MpnORF289P C-terminus (145 aa).

The protein belongs to the type-I restriction system S methylase family. The methyltransferase is composed of M and S polypeptides.

Functionally, the C-terminal section of a specificity (S) subunit of a type I methyltransferase (MTase); this subunit dictates DNA sequence specificity. The single R subunit has multiple frameshifts and is probably not expressed. This Mycoplasma pneumoniae (strain ATCC 29342 / M129 / Subtype 1) (Mycoplasmoides pneumoniae) protein is Putative type I specificity subunit S.MpnORF289P C-terminus.